The primary structure comprises 328 residues: Phosphoserine phosphatase (328 aa).

The active-site Nucleophile is aspartate 113. Positions 113 and 115 each coordinate Mg(2+). Catalysis depends on aspartate 115, which acts as the Proton donor. Residues glutamate 122, arginine 158, 201–202 (SG), and lysine 246 each bind substrate. Mg(2+) is bound at residue aspartate 269. A substrate-binding site is contributed by asparagine 272.

Belongs to the HAD-like hydrolase superfamily. SerB family. Mg(2+) is required as a cofactor.

It carries out the reaction O-phospho-L-serine + H2O = L-serine + phosphate. It catalyses the reaction O-phospho-D-serine + H2O = D-serine + phosphate. The protein operates within amino-acid biosynthesis; L-serine biosynthesis; L-serine from 3-phospho-D-glycerate: step 3/3. In Vibrio cholerae serotype O1 (strain ATCC 39315 / El Tor Inaba N16961), this protein is Phosphoserine phosphatase.